The sequence spans 183 residues: ATP synthase subunit delta (183 aa).

Belongs to the ATPase delta chain family. In terms of assembly, F-type ATPases have 2 components, F(1) - the catalytic core - and F(0) - the membrane proton channel. F(1) has five subunits: alpha(3), beta(3), gamma(1), delta(1), epsilon(1). F(0) has three main subunits: a(1), b(2) and c(10-14). The alpha and beta chains form an alternating ring which encloses part of the gamma chain. F(1) is attached to F(0) by a central stalk formed by the gamma and epsilon chains, while a peripheral stalk is formed by the delta and b chains.

It localises to the cell inner membrane. F(1)F(0) ATP synthase produces ATP from ADP in the presence of a proton or sodium gradient. F-type ATPases consist of two structural domains, F(1) containing the extramembraneous catalytic core and F(0) containing the membrane proton channel, linked together by a central stalk and a peripheral stalk. During catalysis, ATP synthesis in the catalytic domain of F(1) is coupled via a rotary mechanism of the central stalk subunits to proton translocation. Functionally, this protein is part of the stalk that links CF(0) to CF(1). It either transmits conformational changes from CF(0) to CF(1) or is implicated in proton conduction. In Ruthia magnifica subsp. Calyptogena magnifica, this protein is ATP synthase subunit delta.